Here is a 269-residue protein sequence, read N- to C-terminus: Formamidopyrimidine-DNA glycosylase (269 aa).

The active-site Schiff-base intermediate with DNA is the Pro2. The Proton donor role is filled by Glu3. The active-site Proton donor; for beta-elimination activity is Lys57. Residues His90, Arg109, and Lys150 each coordinate DNA. The segment at 235-269 (QVYGREGEPCRVCGTPILAGKHAQRRTYWCRRCQK) adopts an FPG-type zinc-finger fold. Catalysis depends on Arg259, which acts as the Proton donor; for delta-elimination activity.

It belongs to the FPG family. Monomer. The cofactor is Zn(2+).

It carries out the reaction Hydrolysis of DNA containing ring-opened 7-methylguanine residues, releasing 2,6-diamino-4-hydroxy-5-(N-methyl)formamidopyrimidine.. It catalyses the reaction 2'-deoxyribonucleotide-(2'-deoxyribose 5'-phosphate)-2'-deoxyribonucleotide-DNA = a 3'-end 2'-deoxyribonucleotide-(2,3-dehydro-2,3-deoxyribose 5'-phosphate)-DNA + a 5'-end 5'-phospho-2'-deoxyribonucleoside-DNA + H(+). Involved in base excision repair of DNA damaged by oxidation or by mutagenic agents. Acts as a DNA glycosylase that recognizes and removes damaged bases. Has a preference for oxidized purines, such as 7,8-dihydro-8-oxoguanine (8-oxoG). Has AP (apurinic/apyrimidinic) lyase activity and introduces nicks in the DNA strand. Cleaves the DNA backbone by beta-delta elimination to generate a single-strand break at the site of the removed base with both 3'- and 5'-phosphates. The chain is Formamidopyrimidine-DNA glycosylase from Cronobacter sakazakii (strain ATCC BAA-894) (Enterobacter sakazakii).